The following is a 3014-amino-acid chain: Cadherin EGF LAG seven-pass G-type receptor 1 (3014 aa).

The N-terminal stretch at 1–20 is a signal peptide; it reads MAPPPPPVLPVLLLLAAAAA. Over 22 to 2469 the chain is Extracellular; sequence PAMGLRAAAW…RENGEVLPLK (2448 aa). The segment at 205–242 is disordered; it reads AGTPSASPSPSPPLPPNLPEARAGPARRARRGTSGRGS. Pro residues predominate over residues 211–222; that stretch reads SPSPSPPLPPNL. Cadherin domains are found at residues 246 to 353, 354 to 459, 460 to 565, 566 to 687, 688 to 789, 790 to 892, 893 to 999, 1000 to 1101, and 1106 to 1224; these read PMPN…SPVF, EQSE…YPQF, SEQN…EPIF, VSSP…DPVF, TQPT…RPVF, QSSH…APQF, LWDF…APMF, EKDE…PPVL, and ILFN…SPLL. Residues Asn403, Asn546, Asn634, and Asn778 are each glycosylated (N-linked (GlcNAc...) asparagine). N-linked (GlcNAc...) asparagine glycosylation is found at Asn1114, Asn1139, Asn1213, Asn1249, Asn1259, and Asn1287. The region spanning 1303–1361 is the EGF-like 1; calcium-binding domain; sequence DDNICLREPCENYMKCVSVLRFDSSAPFLSSTTVLFRPIHPINGLRCRCPPGFTGDYCE. Cystine bridges form between Cys1307–Cys1318, Cys1312–Cys1349, Cys1351–Cys1360, Cys1367–Cys1378, Cys1372–Cys1387, Cys1389–Cys1398, Cys1407–Cys1418, Cys1412–Cys1428, and Cys1430–Cys1440. An EGF-like 2; calcium-binding domain is found at 1363-1399; sequence EIDLCYSDPCGANGRCRSREGGYTCECFEDFTGEHCE. One can recognise an EGF-like 3; calcium-binding domain in the interval 1403 to 1441; it reads RSGRCANGVCKNGGTCVNLLIGGFHCVCPPGEYERPYCE. The Laminin G-like 1 domain occupies 1442 to 1646; the sequence is VTTRSFPPQS…IANNGTREGC (205 aa). 3 N-linked (GlcNAc...) asparagine glycosylation sites follow: Asn1576, Asn1623, and Asn1640. 13 disulfides stabilise this stretch: Cys1620-Cys1646, Cys1653-Cys1664, Cys1658-Cys1673, Cys1675-Cys1684, Cys1840-Cys1870, Cys1876-Cys1887, Cys1881-Cys1896, Cys1898-Cys1907, Cys1911-Cys1922, Cys1916-Cys1934, Cys1936-Cys1945, Cys1953-Cys1966, and Cys1968-Cys1978. An EGF-like 4; calcium-binding domain is found at 1649–1685; the sequence is RRNFCDGRRCQNGGTCVNRWNMYLCECPLRFGGKNCE. Asn1666 bears the (3R)-3-hydroxyasparagine mark. Residues 1689–1870 form the Laminin G-like 2 domain; it reads PHPQLFSGES…ALKVRVKDGC (182 aa). The 36-residue stretch at 1872 to 1907 folds into the EGF-like 5; calcium-binding domain; it reads VDDPCTSSPCPPNSRCHDAWEDYSCVCDKGYLGINC. Asp1889 bears the (3R)-3-hydroxyaspartate mark. Residues 1908–1946 enclose the EGF-like 6; calcium-binding domain; sequence VDACHLNPCENMGACVRSPGSPQGYVCECGPSHYGPYCE. Positions 1947-1979 constitute an EGF-like 7; calcium-binding domain; that stretch reads NKLDLPCPRGWWGNPVCGPCHCAVSKGFDPDCN. A glycan (N-linked (GlcNAc...) asparagine) is linked at Asn1979. Residues 1981-2016 form the EGF-like 8; calcium-binding domain; the sequence is TNGQCQCKENYYKLLAQDTCLPCDCFPHGSHSRTCD. Intrachain disulfides connect Cys1985/Cys2000, Cys1987/Cys2003, Cys2005/Cys2015, Cys2024/Cys2033, and Cys2036/Cys2048. The 48-residue stretch at 2003–2050 folds into the Laminin EGF-like domain; it reads CDCFPHGSHSRTCDMATGQCACKPGVIGRQCNRCDNPFAEVTTLGCEV. N-linked (GlcNAc...) asparagine glycans are attached at residues Asn2103, Asn2122, and Asn2257. Positions 2291 to 2328 are disordered; the sequence is PEEKEGPLLRPAGRRTTPQTTRPGPGTEREAPISRRRR. Residues 2297–2461 form the GAIN-B domain; the sequence is PLLRPAGRRT…AVLMDISRRE (165 aa). Residues 2300–2316 are compositionally biased toward low complexity; sequence RPAGRRTTPQTTRPGPG. 2 disulfide bridges follow: Cys2411/Cys2443 and Cys2431/Cys2445. A GPS region spans residues 2411–2461; it reads CVFWNHSLAVGGTGGWSARGCELLSRNRTHVACQCSHTASFAVLMDISRRE. N-linked (GlcNAc...) asparagine glycans are attached at residues Asn2415 and Asn2437. A helical transmembrane segment spans residues 2470–2490; that stretch reads IVTYAAVSLSLAALLVAFVLL. Residues 2491–2501 are Cytoplasmic-facing; the sequence is SLVRMLRSNLH. Residues 2502 to 2522 traverse the membrane as a helical segment; the sequence is SIHKHLAVALFLSQLVFVIGI. The N-linked (GlcNAc...) asparagine glycan is linked to Asn2523. The Extracellular portion of the chain corresponds to 2523–2527; the sequence is NQTEN. The helical transmembrane segment at 2528 to 2548 threads the bilayer; the sequence is PFLCTVVAILLHYIYMSTFAW. Topologically, residues 2549–2572 are cytoplasmic; the sequence is TLVESLHVYRMLTEVRNIDTGPMR. Residues 2573–2593 form a helical membrane-spanning segment; that stretch reads FYYVVGWGIPAIVTGLAVGLD. Over 2594 to 2611 the chain is Extracellular; the sequence is PQGYGNPDFCWLSLQDTL. The helical transmembrane segment at 2612 to 2632 threads the bilayer; it reads IWSFAGPIGAVIIINTVTSVL. The Cytoplasmic portion of the chain corresponds to 2633–2655; it reads SAKVSCQRKHHYYGKKGIVSLLR. The helical transmembrane segment at 2656–2676 threads the bilayer; sequence TAFLLLLLISATWLLGLLAVN. The Extracellular portion of the chain corresponds to 2677–2683; that stretch reads RDALSFH. A helical membrane pass occupies residues 2684 to 2704; sequence YLFAIFSGLQGPFVLLFHCVL. The Cytoplasmic portion of the chain corresponds to 2705-3014; sequence NQEVRKHLKG…QADGSDSEKP (310 aa). A phosphoserine mark is found at Ser2761 and Ser2764. 2 disordered regions span residues 2777-2939 and 2954-3014; these read SSGL…PPPL and LADC…SEKP. Positions 2796–2806 are enriched in basic and acidic residues; sequence SCKDPPGHDSD. Residues 2814–2825 are compositionally biased toward low complexity; sequence DEQSSSYASSHS. Ser2871 and Ser2873 each carry phosphoserine. Basic and acidic residues predominate over residues 2876 to 2904; the sequence is PSGKPRLKVETKVSVELHREEQGSHRGEY. Over residues 2960–2969 the composition is skewed to low complexity; it reads SPTSSRTSSL. The span at 2983–2992 shows a compositional bias: basic and acidic residues; it reads PGREPGRDHL.

It belongs to the G-protein coupled receptor 2 family. LN-TM7 subfamily. The iron and 2-oxoglutarate dependent 3-hydroxylation of aspartate and asparagine is (R) stereospecific within EGF domains.

The protein resides in the cell membrane. Functionally, receptor that may have an important role in cell/cell signaling during nervous system formation. This Homo sapiens (Human) protein is Cadherin EGF LAG seven-pass G-type receptor 1 (CELSR1).